The sequence spans 212 residues: ATP-dependent Clp protease proteolytic subunit (212 aa).

The Nucleophile role is filled by S114. The active site involves H139.

It belongs to the peptidase S14 family. In terms of assembly, fourteen ClpP subunits assemble into 2 heptameric rings which stack back to back to give a disk-like structure with a central cavity, resembling the structure of eukaryotic proteasomes.

Its subcellular location is the cytoplasm. The catalysed reaction is Hydrolysis of proteins to small peptides in the presence of ATP and magnesium. alpha-casein is the usual test substrate. In the absence of ATP, only oligopeptides shorter than five residues are hydrolyzed (such as succinyl-Leu-Tyr-|-NHMec, and Leu-Tyr-Leu-|-Tyr-Trp, in which cleavage of the -Tyr-|-Leu- and -Tyr-|-Trp bonds also occurs).. Cleaves peptides in various proteins in a process that requires ATP hydrolysis. Has a chymotrypsin-like activity. Plays a major role in the degradation of misfolded proteins. This is ATP-dependent Clp protease proteolytic subunit from Aromatoleum aromaticum (strain DSM 19018 / LMG 30748 / EbN1) (Azoarcus sp. (strain EbN1)).